Consider the following 260-residue polypeptide: Hemin import ATP-binding protein HmuV (260 aa).

Residues 7-243 (IQASNISVTF…ERIEQVYGYS (237 aa)) form the ABC transporter domain. 39–46 (GPNGAGKS) is a binding site for ATP.

This sequence belongs to the ABC transporter superfamily. Heme (hemin) importer (TC 3.A.1.14.5) family. In terms of assembly, the complex is composed of two ATP-binding proteins (HmuV), two transmembrane proteins (HmuU) and a solute-binding protein (HmuT).

It is found in the cell inner membrane. Its function is as follows. Part of the ABC transporter complex HmuTUV involved in hemin import. Responsible for energy coupling to the transport system. This chain is Hemin import ATP-binding protein HmuV, found in Vibrio anguillarum (strain ATCC 68554 / 775) (Listonella anguillarum).